Here is a 384-residue protein sequence, read N- to C-terminus: MAAQNGNTSFTPNFNPPQDHASSLSFNFSYGDYDLPMDEDEDMTKTRTFFAAKIVIGIALAGIMLVCGIGNFVFIAALTRYKKLRNLTNLLIANLAISDFLVAIICCPFEMDYYVVRQLSWEHGHVLCASVNYLRTVSLYVSTNALLAIAIDRYLAIVHPLKPRMNYQTASFLIALVWMVSILIAIPSAYFATETVLFIVKSQEKIFCGQIWPVDQQLYYKSYFLFIFGVEFVGPVVTMTLCYARISRELWFKAVPGFQTEQIRKRLRCRRKTVLVLMCILTAYVLCWAPFYGFTIVRDFFPTVFVKEKHYLTAFYVVECIAMSNSMINTVCFVTVKNNTMKYFKKMMLLHWRPSQRGSKSSADLDLRTNGVPTTEEVDCIRLK.

The Extracellular segment spans residues 1–54 (MAAQNGNTSFTPNFNPPQDHASSLSFNFSYGDYDLPMDEDEDMTKTRTFFAAKI). Residues N7 and N27 are each glycosylated (N-linked (GlcNAc...) asparagine). Residues 55-75 (VIGIALAGIMLVCGIGNFVFI) form a helical membrane-spanning segment. Residues 76 to 89 (AALTRYKKLRNLTN) lie on the Cytoplasmic side of the membrane. A helical membrane pass occupies residues 90–110 (LLIANLAISDFLVAIICCPFE). The Extracellular portion of the chain corresponds to 111-136 (MDYYVVRQLSWEHGHVLCASVNYLRT). C128 and C208 are oxidised to a cystine. Residues 137-157 (VSLYVSTNALLAIAIDRYLAI) traverse the membrane as a helical segment. The Cytoplasmic segment spans residues 158 to 171 (VHPLKPRMNYQTAS). Residues 172 to 192 (FLIALVWMVSILIAIPSAYFA) form a helical membrane-spanning segment. Topologically, residues 193–223 (TETVLFIVKSQEKIFCGQIWPVDQQLYYKSY) are extracellular. Residues 224–244 (FLFIFGVEFVGPVVTMTLCYA) form a helical membrane-spanning segment. Residues 245–273 (RISRELWFKAVPGFQTEQIRKRLRCRRKT) are Cytoplasmic-facing. The chain crosses the membrane as a helical span at residues 274 to 294 (VLVLMCILTAYVLCWAPFYGF). The Extracellular segment spans residues 295 to 313 (TIVRDFFPTVFVKEKHYLT). Residues 314–334 (AFYVVECIAMSNSMINTVCFV) form a helical membrane-spanning segment. The Cytoplasmic portion of the chain corresponds to 335-384 (TVKNNTMKYFKKMMLLHWRPSQRGSKSSADLDLRTNGVPTTEEVDCIRLK).

It belongs to the G-protein coupled receptor 1 family. Homodimer. In terms of tissue distribution, expressed in the ileocecum, thyroid gland, pituitary gland, salivary gland, adrenal gland, testis, ovary and brain.

It is found in the cell membrane. Functionally, receptor for prokineticin 2. Exclusively coupled to the G(q) subclass of heteromeric G proteins. Activation leads to mobilization of calcium, stimulation of phosphoinositide turnover and activation of p44/p42 mitogen-activated protein kinase. This is Prokineticin receptor 2 (PROKR2) from Homo sapiens (Human).